The primary structure comprises 614 residues: UvrABC system protein C (614 aa).

The GIY-YIG domain maps to 16–94; it reads SRPGVYRMFG…VKSLKPRFNV (79 aa). The UVR domain maps to 204-239; that stretch reads GELQKRLASEMEAASEAMEFETAARLRDRIRAIAHV.

Belongs to the UvrC family. As to quaternary structure, interacts with UvrB in an incision complex.

Its subcellular location is the cytoplasm. Its function is as follows. The UvrABC repair system catalyzes the recognition and processing of DNA lesions. UvrC both incises the 5' and 3' sides of the lesion. The N-terminal half is responsible for the 3' incision and the C-terminal half is responsible for the 5' incision. The protein is UvrABC system protein C of Hyphomonas neptunium (strain ATCC 15444).